The following is a 5654-amino-acid chain: Mucin-5AC (5654 aa).

The first 27 residues, 1 to 27, serve as a signal peptide directing secretion; sequence MSVGRRKLALLWALALALACTRHTGHA. Residues 27-49 are disordered; the sequence is AQDGSSESSYKHHPALSPIARGP. Residues 79–249 form the VWFD 1 domain; it reads RVCSTWGSFH…KMDDPTDQCQ (171 aa). Disulfide bonds link Cys-81/Cys-211 and Cys-103/Cys-248. A Cu(2+)-binding site is contributed by Glu-198. N-linked (GlcNAc...) asparagine glycans are attached at residues Asn-205 and Asn-258. The Cu(2+) site is built by His-320 and His-367. A TIL 1 domain is found at 338 to 394; sequence CPNNMQYHECRSPCADTCSNQEHSRACEDHCVAGCFCPEGTVLDDIGQTGCVPVSKC. Residues 394-465 form the VWFC 1 domain; that stretch reads CACVYNGAAY…CSYVLTKPCD (72 aa). Asn-415 carries an N-linked (GlcNAc...) asparagine glycan. Residues 432–607 enclose the VWFD 2 domain; sequence GTCSVLGGAH…NTFKTQAACP (176 aa). Intrachain disulfides connect Cys-434-Cys-571, Cys-456-Cys-606, and Cys-478-Cys-486. N-linked (GlcNAc...) asparagine glycosylation occurs at Asn-524. 2 consecutive TIL domains span residues 704–761 and 818–863; these read CPKS…ASNC and DTGA…AEDC. Residues 901-1072 form the VWFD 3 domain; the sequence is ATCAVYGDGH…NSWKLSPSCP (172 aa). 4 disulfide bridges follow: Cys-903–Cys-1036, Cys-925–Cys-1071, Cys-934–Cys-1033, and Cys-953–Cys-960. Asn-1308 carries N-linked (GlcNAc...) asparagine glycosylation. The interval 1336 to 1377 is disordered; that stretch reads LVVSSTHTPSNGPSSAHTGPPSSAWPTTAGTSPRTRLPTASA. The segment covering 1338–1377 has biased composition (polar residues); sequence VSSTHTPSNGPSSAHTGPPSSAWPTTAGTSPRTRLPTASA. The stretch at 1383–1481 is one Cys-rich subdomain 1 repeat; it reads CGEKCLWSPW…RVQCCTPLPC (99 aa). Residues 1383-4731 are 9 X Cys-rich subdomain repeats; that stretch reads CGEKCLWSPW…VLCCETPRGC (3349 aa). A C-linked (Man) tryptophan glycan is attached at Trp-1389. Composition is skewed to low complexity over residues 1483-1539 and 1547-1575; these read TSSS…TFST and ATST…PSTS. A disordered region spans residues 1483 to 1575; sequence TSSSPAQTTP…KPTPTEPSTS (93 aa). A Cys-rich subdomain 2 repeat occupies 1577–1677; sequence CLQELCTWTE…IQCCETVNVC (101 aa). Trp-1584 carries C-linked (Man) tryptophan glycosylation. Residues 1688-1733 form a disordered region; the sequence is ATTRPTPHPTGAQTQTTFTTHMPSASTEQPTATSRGGPTATSVTQG. The span at 1697–1707 shows a compositional bias: low complexity; sequence TGAQTQTTFTT. Over residues 1708–1733 the composition is skewed to polar residues; the sequence is HMPSASTEQPTATSRGGPTATSVTQG. The Cys-rich subdomain 3 repeat unit spans residues 1743–1847; that stretch reads CHPRCTWTKW…VLCCETPRGC (105 aa). A C-linked (Man) tryptophan glycan is attached at Trp-1749. A disordered region spans residues 1849-1948; the sequence is MTSTPGSTSS…KPTPTEPSTS (100 aa). Low complexity-rich tracts occupy residues 1850–1912 and 1920–1948; these read TSTP…TFST and ATST…PSTS. A Cys-rich subdomain 4 repeat occupies 1950 to 2050; the sequence is CLQELCTWTE…IQCCETVNVC (101 aa). A glycan (C-linked (Man) tryptophan) is linked at Trp-1957. The interval 2059–2110 is disordered; the sequence is TVATTRPTPHPTGAQTQTTFTTHMPSASTEQPTATSRGGPTATSVTQGTHTT. Residues 2070–2080 show a composition bias toward low complexity; that stretch reads TGAQTQTTFTT. The span at 2081 to 2110 shows a compositional bias: polar residues; the sequence is HMPSASTEQPTATSRGGPTATSVTQGTHTT. A Cys-rich subdomain 5 repeat occupies 2116-2220; it reads CHPRCTWTTW…VLCCETPKGC (105 aa). A C-linked (Man) tryptophan glycan is attached at Trp-2122. Low complexity predominate over residues 2224-2234; it reads STPVTAPSTPS. The tract at residues 2224-3214 is disordered; it reads STPVTAPSTP…SHVSISKTTH (991 aa). Positions 2235–2249 are enriched in polar residues; sequence GRATSPTQSTSSWQK. Composition is skewed to low complexity over residues 2250–3184 and 3192–3214; these read SRTT…TPGP and PTTS…KTTH. Residues 2257 to 3200 form a 107 X 8 AA approximate tandem repeats of T-T-S-T-T-S-A-P region; the sequence is TTSTTSTPQT…VPTTSTASVS (944 aa). O-linked (GalNAc) threonine glycosylation is found at Thr-2395, Thr-2405, Thr-2451, Thr-2461, Thr-2531, Thr-2541, Thr-2571, Thr-2581, Thr-2699, Thr-2709, Thr-2883, Thr-2893, Thr-2979, Thr-2989, Thr-3067, and Thr-3077. Residues 3222 to 3326 form a Cys-rich subdomain 6 repeat; the sequence is CHLRCTWTKW…VLCCETPKGC (105 aa). C-linked (Man) tryptophan glycosylation is present at Trp-3228. Low complexity predominate over residues 3329–3340; sequence TSTPVTAPSTPS. The interval 3329–3515 is disordered; the sequence is TSTPVTAPST…SVSKTTHSQP (187 aa). Polar residues predominate over residues 3341-3355; it reads GRATSPTQSTSSWQK. Low complexity predominate over residues 3356–3513; that stretch reads SRTTTLVTTS…HVSVSKTTHS (158 aa). The 17 X 8 AA approximate tandem repeats of T-T-S-T-T-S-A-P stretch occupies residues 3363-3498; it reads TTSTTSTPQT…VTTTSTASVS (136 aa). The stretch at 3520–3660 is one Cys-rich subdomain 7 repeat; sequence CHPRCTWTKW…WQKSRTTTLV (141 aa). Trp-3526 is a glycosylation site (C-linked (Man) tryptophan). Positions 3628–3638 are enriched in low complexity; sequence STSVTAPSTPS. The segment at 3628 to 3951 is disordered; it reads STSVTAPSTP…KTTHSQPVTR (324 aa). Positions 3639–3660 are enriched in polar residues; sequence GRATSPTQSTSSWQKSRTTTLV. The tract at residues 3661-3931 is 34 X 8 AA approximate tandem repeats of T-T-S-T-T-S-A-P; sequence TSSITSTTQT…VPTTSTASVS (271 aa). Over residues 3661–3946 the composition is skewed to low complexity; the sequence is TSSITSTTQT…HVSVSKTTHS (286 aa). Residue Asn-3774 is glycosylated (N-linked (GlcNAc...) asparagine). The Cys-rich subdomain 8 repeat unit spans residues 3953 to 4057; sequence CHPRCTWTKW…VLCCETPKGC (105 aa). A C-linked (Man) tryptophan glycan is attached at Trp-3959. The span at 4060 to 4071 shows a compositional bias: low complexity; it reads TSTPVTAPSTPS. The segment at 4060-4625 is disordered; sequence TSTPVTAPST…KTTHSQPVTS (566 aa). Residues 4072 to 4088 show a composition bias toward polar residues; sequence GRATSPTQSTSSWQKSR. Over residues 4089–4610 the composition is skewed to low complexity; the sequence is TTTLVTTSTT…TTPVSKTSTS (522 aa). Residues 4093 to 4595 are 58 X 8 AA approximate tandem repeats of T-T-S-T-T-S-A-P; the sequence is VTTSTTSTPQ…TSGPGTTPSP (503 aa). 16 O-linked (GalNAc) threonine glycosylation sites follow: Thr-4224, Thr-4234, Thr-4296, Thr-4306, Thr-4320, Thr-4330, Thr-4376, Thr-4386, Thr-4440, Thr-4450, Thr-4480, Thr-4490, Thr-4512, Thr-4522, Thr-4568, and Thr-4578. The segment covering 4611–4624 has biased composition (polar residues); that stretch reads HLSVSKTTHSQPVT. The stretch at 4627-4731 is one Cys-rich subdomain 9 repeat; sequence CHPLCAWTKW…VLCCETPRGC (105 aa). Trp-4633 carries a C-linked (Man) tryptophan glycan. The segment at 4830 to 4849 is disordered; it reads TLPPAPATSPSISTSEPVTE. The region spanning 4852-4918 is the VWFC 2 domain; that stretch reads CPNAVPPRKK…DGCCHHYQCQ (67 aa). 2 N-linked (GlcNAc...) asparagine glycosylation sites follow: Asn-4869 and Asn-4942. The 185-residue stretch at 4919–5103 folds into the VWFD 4 domain; it reads CVCSGWGDPH…VSIPDQPACH (185 aa). 3 cysteine pairs are disulfide-bonded: Cys-4921/Cys-5063, Cys-4943/Cys-5102, and Cys-4967/Cys-4975. N-linked (GlcNAc...) asparagine glycosylation is found at Asn-5057, Asn-5093, and Asn-5236. A VWFC 3 domain is found at 5276–5345; the sequence is PRCLGPHGEP…GQCCPQYSCA (70 aa). N-linked (GlcNAc...) asparagine glycosylation is found at Asn-5347, Asn-5377, Asn-5386, Asn-5455, and Asn-5528. The VWFC 4 domain occupies 5381-5448; the sequence is TVCSINGTLY…QSGQCCGTCV (68 aa). 4 cysteine pairs are disulfide-bonded: Cys-5532/Cys-5582, Cys-5546/Cys-5596, Cys-5557/Cys-5612, and Cys-5561/Cys-5614. Positions 5532-5620 constitute a CTCK domain; it reads CAVYHRSLII…ECGCMGRRCP (89 aa). Residue Asn-5591 is glycosylated (N-linked (GlcNAc...) asparagine). Residues 5622–5654 are disordered; that stretch reads PGDTQHSEEAEPEPSQEAESGSWERGVPVSPMH.

As to quaternary structure, homomultimer; disulfide-linked. The N- and C-terminus mediate their assembly into higher order structures to form filaments. The CTCK domains of two polypeptides associate in the endoplasmic reticulum to generate intermolecularly disulfide-bonded dimers. These dimers progress to the Golgi apparatus, which is a more acidic environment than the endoplasmic reticulum. Under acidic conditions, the N-termini form non-covalent intermolecular interactions that juxtapose assemblies from different CTCK-linked dimers to produce long, disulfide-linked polymers that remain highly compact until secretion. In terms of processing, C-, O- and N-glycosylated. O-glycosylated on the second and last Thr of the Thr-/Ser-rich tandem repeats TTPSPVPTTSTTSA. One form of glycosylation is also known as Lewis B (LeB) blood group antigen, a tetrasaccharide consisting of N-acetylglucosamine having a fucosyl residue attached. It has a role as an epitope and antigen and functions as a receptor for H.pylori binding and facilitates infection. C-mannosylation in the Cys-rich subdomains may be required for proper folding of these regions and for export from the endoplasmic reticulum during biosynthesis. Post-translationally, proteolytic cleavage in the C-terminal is initiated early in the secretory pathway and does not involve a serine protease. The extent of cleavage is increased in the acidic parts of the secretory pathway. Cleavage generates a reactive group which could link the protein to a primary amide. Highly expressed in surface mucosal cells of respiratory tract and stomach epithelia. Overexpressed in a number of carcinomas. Also expressed in Barrett's esophagus epithelium and in the proximal duodenum.

It is found in the secreted. Its function is as follows. Gel-forming glycoprotein of gastric and respiratory tract epithelia that protects the mucosa from infection and chemical damage by binding to inhaled microorganisms and particles that are subsequently removed by the mucociliary system. Interacts with H.pylori in the gastric epithelium, Barrett's esophagus as well as in gastric metaplasia of the duodenum (GMD). In Homo sapiens (Human), this protein is Mucin-5AC.